Reading from the N-terminus, the 98-residue chain is Integration host factor subunit beta (98 aa).

The protein belongs to the bacterial histone-like protein family. In terms of assembly, heterodimer of an alpha and a beta chain.

Functionally, this protein is one of the two subunits of integration host factor, a specific DNA-binding protein that functions in genetic recombination as well as in transcriptional and translational control. This is Integration host factor subunit beta from Gluconacetobacter diazotrophicus (strain ATCC 49037 / DSM 5601 / CCUG 37298 / CIP 103539 / LMG 7603 / PAl5).